Reading from the N-terminus, the 215-residue chain is Cytochrome b6 (215 aa).

A helical membrane pass occupies residues 32 to 52; sequence IFHCLGGITLTCFLVQVATGF. Residue cysteine 35 participates in heme c binding. Residues histidine 86 and histidine 100 each coordinate heme b. 3 helical membrane-spanning segments follow: residues 90–110, 116–136, and 186–206; these read ASMM…TGGF, LTWV…VTGY, and LHTF…FSMI. Residues histidine 187 and histidine 202 each contribute to the heme b site.

It belongs to the cytochrome b family. PetB subfamily. As to quaternary structure, the 4 large subunits of the cytochrome b6-f complex are cytochrome b6, subunit IV (17 kDa polypeptide, PetD), cytochrome f and the Rieske protein, while the 4 small subunits are PetG, PetL, PetM and PetN. The complex functions as a dimer. Requires heme b as cofactor. The cofactor is heme c.

The protein resides in the plastid. It is found in the chloroplast thylakoid membrane. In terms of biological role, component of the cytochrome b6-f complex, which mediates electron transfer between photosystem II (PSII) and photosystem I (PSI), cyclic electron flow around PSI, and state transitions. In Nymphaea alba (White water-lily), this protein is Cytochrome b6.